The chain runs to 333 residues: Fructose-1,6-bisphosphatase class 1 (333 aa).

Positions 92, 113, 115, and 116 each coordinate Mg(2+). Residues 116 to 119, Asn209, Tyr242, and Lys272 each bind substrate; that span reads DGSS. Glu278 lines the Mg(2+) pocket.

It belongs to the FBPase class 1 family. Homotetramer. Mg(2+) is required as a cofactor.

It localises to the cytoplasm. The enzyme catalyses beta-D-fructose 1,6-bisphosphate + H2O = beta-D-fructose 6-phosphate + phosphate. It functions in the pathway carbohydrate biosynthesis; Calvin cycle. This is Fructose-1,6-bisphosphatase class 1 from Chlorobium luteolum (strain DSM 273 / BCRC 81028 / 2530) (Pelodictyon luteolum).